Reading from the N-terminus, the 371-residue chain is Protein NDRG2 (371 aa).

Positions 1–22 (MAELQEVQITEEKPLLPGQTPE) are disordered. Position 2 is an N-acetylalanine (Ala2). Thr20 is subject to Phosphothreonine. Residues Ser326 and Ser328 each carry the phosphoserine modification. The residue at position 330 (Thr330) is a Phosphothreonine; by SGK1. Ser332 carries the phosphoserine; by PKC/PRKCQ or SGK1 modification. The residue at position 334 (Thr334) is a Phosphothreonine. Residues 334-371 (TSAASIDGSRSRSRTLSQSSESGTLPSGPPGHTMEVSC) are disordered. A phosphoserine mark is found at Ser335, Ser338, and Ser344. Thr348 bears the Phosphothreonine; by PKB/AKT1 or SGK1 mark. Residues Ser350, Ser352, Ser353, and Ser355 each carry the phosphoserine modification. Thr357 is modified (phosphothreonine). Residue Ser370 is modified to Phosphoserine.

It belongs to the NDRG family. In terms of assembly, interacts with CTNNB1. Expressed at highest levels in brain, heart and liver, and at lower levels in kidney, colon, skeletal muscle, adrenal gland, ovary and uterus (at protein level).

The protein localises to the cytoplasm. It is found in the perinuclear region. It localises to the cell projection. Its subcellular location is the growth cone. Contributes to the regulation of the Wnt signaling pathway. Down-regulates CTNNB1-mediated transcriptional activation of target genes, such as CCND1, and may thereby act as tumor suppressor. May be involved in dendritic cell and neuron differentiation. The sequence is that of Protein NDRG2 (Ndrg2) from Mus musculus (Mouse).